Reading from the N-terminus, the 399-residue chain is Phosphoglycerate kinase (399 aa).

Substrate is bound by residues 22-24 (DFN), R38, 61-64 (HLGR), R120, and R153. ATP is bound by residues K204, E326, and 352–355 (GGDT).

This sequence belongs to the phosphoglycerate kinase family. Monomer.

The protein resides in the cytoplasm. The catalysed reaction is (2R)-3-phosphoglycerate + ATP = (2R)-3-phospho-glyceroyl phosphate + ADP. It functions in the pathway carbohydrate degradation; glycolysis; pyruvate from D-glyceraldehyde 3-phosphate: step 2/5. This chain is Phosphoglycerate kinase, found in Pelobacter propionicus (strain DSM 2379 / NBRC 103807 / OttBd1).